Consider the following 386-residue polypeptide: 3-hydroxyisobutyryl-CoA hydrolase, mitochondrial (386 aa).

A mitochondrion-targeting transit peptide spans 1-32 (MGQREMWRLMSRFNAFKRTNTILHHLRMSKHT). Residues Lys-55 and Lys-92 each carry the N6-acetyllysine; alternate modification. Lys-55 and Lys-92 each carry N6-succinyllysine; alternate. Residues Glu-121, Gly-146, Glu-169, and Asp-177 each coordinate substrate. Lys-221 is modified (N6-acetyllysine; alternate). Lys-221 is subject to N6-succinyllysine; alternate. The residue at position 234 (Ser-234) is a Phosphoserine. Residue Lys-257 is modified to N6-succinyllysine. N6-acetyllysine; alternate is present on Lys-297. Position 297 is an N6-succinyllysine; alternate (Lys-297). At Lys-301 the chain carries N6-succinyllysine. Position 353 is an N6-acetyllysine; alternate (Lys-353). Lys-353 carries the post-translational modification N6-succinyllysine; alternate. Position 356 is a phosphoserine (Ser-356). Lys-360 and Lys-365 each carry N6-acetyllysine. N6-succinyllysine is present on Lys-377.

Belongs to the enoyl-CoA hydratase/isomerase family. Highly expressed in liver and kidney, also detected in heart, muscle and brain (at protein level). Not detected in lung.

The protein localises to the mitochondrion. The enzyme catalyses 3-hydroxy-2-methylpropanoyl-CoA + H2O = 3-hydroxy-2-methylpropanoate + CoA + H(+). It participates in amino-acid degradation; L-valine degradation. Its function is as follows. Hydrolyzes 3-hydroxyisobutyryl-CoA (HIBYL-CoA), a saline catabolite. Has high activity toward isobutyryl-CoA. Could be an isobutyryl-CoA dehydrogenase that functions in valine catabolism. Also hydrolyzes 3-hydroxypropanoyl-CoA. This is 3-hydroxyisobutyryl-CoA hydrolase, mitochondrial (HIBCH) from Homo sapiens (Human).